The chain runs to 287 residues: Lactamase-like protein nscB (287 aa).

H62, H64, D66, and H67 together coordinate Zn(2+). D66 (proton donor/acceptor) is an active-site residue.

It belongs to the metallo-beta-lactamase superfamily. Zn(2+) serves as cofactor.

It participates in secondary metabolite biosynthesis. Functionally, lactamase-like protein; part of the gene cluster that mediates the biosynthesis of neosartoricin B, a prenylated anthracenone that probably exhibits T-cell antiproliferative activity, suggestive of a physiological role as an immunosuppressive agent. The non-reducing polyketide synthase nscA probably synthesizes and cyclizes the decaketide backbone. The hydrolase nscB then mediates the product release through hydrolysis followed by spontaneous decarboxylation. The prenyltransferase nscD catalyzes the addition of the dimethylallyl group to the aromatic C5. The FAD-dependent monooxygenase nscC is then responsible for the stereospecific hydroxylation at C2. Neosartoricin B can be converted into two additional compounds neosartoricins C and D. Neosartoricin C is a spirocyclic compound that is cyclized through the attack of C3 hydroxyl on C14, followed by dehydration. On the other hand, neosartoricin D is a further cyclized compound in which attack of C2 on C14 in neosartoricin C results in the formation of the acetal-containing dioxabicyclo-octanone ring. Both of these compounds are novel and possibly represent related metabolites of the gene cluster. This chain is Lactamase-like protein nscB, found in Trichophyton verrucosum (strain HKI 0517).